The following is a 224-amino-acid chain: Phosphoribosyltransferase domain-containing protein 1 (224 aa).

Residues E140 and D141 each coordinate Mg(2+). Residues 140 to 148 (EDIINTGRT), K172, 193 to 194 (FV), and D200 contribute to the GMP site. D200 is a Mg(2+) binding site.

It belongs to the purine/pyrimidine phosphoribosyltransferase family.

This Xenopus laevis (African clawed frog) protein is Phosphoribosyltransferase domain-containing protein 1 (prtfdc1).